The chain runs to 223 residues: MNLQRLSVFGTDNIGVYIYTNNKYTIIPRGLDSETKENIAQVLGTELLEAEISRSFLLGIFISGNDNGILLPKSTIDDEFRFLKENLRDCRVEILNSKVTALGNTILANNKAALIYPEFNDIEEKIIKETLGVEDIKRGKIAQMITVGSVGVITNKGGLVHVDTSEKELKELEKLFGVKIDIGTVNFGSVFIKSGLVANDKGTLVGASTTGPEILRIQKALGE.

Belongs to the eIF-6 family. Associates with the 50S ribosomal subunit, specifically with protein L14. Binds to 23S rRNA, possibly between where the 30S and 50S subunits associate to initiate translation. Modified in an unknown fashion (not phosphorylation) following release from 50S ribosomal subunits.

Binds to the 50S ribosomal subunit and prevents its association with the 30S ribosomal subunit to form the 70S initiation complex. Inhibits translation of both leadered and leaderless mRNAs, maybe by binding to the 50S ribosome subunit, preventing it from binding to the 30S subunit. The protein is Translation initiation factor 6 of Saccharolobus solfataricus (strain ATCC 35092 / DSM 1617 / JCM 11322 / P2) (Sulfolobus solfataricus).